Consider the following 282-residue polypeptide: UDP-N-acetylenolpyruvoylglucosamine reductase (282 aa).

The FAD-binding PCMH-type domain maps to 15 to 179 (IKSFAKYVYF…LSAEFEFEYK (165 aa)). Arg157 is an active-site residue. The Proton donor role is filled by Ser207. Residue Glu278 is part of the active site.

The protein belongs to the MurB family. It depends on FAD as a cofactor.

It is found in the cytoplasm. It catalyses the reaction UDP-N-acetyl-alpha-D-muramate + NADP(+) = UDP-N-acetyl-3-O-(1-carboxyvinyl)-alpha-D-glucosamine + NADPH + H(+). It functions in the pathway cell wall biogenesis; peptidoglycan biosynthesis. In terms of biological role, cell wall formation. In Francisella tularensis subsp. tularensis (strain SCHU S4 / Schu 4), this protein is UDP-N-acetylenolpyruvoylglucosamine reductase.